Consider the following 302-residue polypeptide: MPAITASMVAELRAKTDAPMMECKKALTEAEGDLNKAEELLRVKLGSKASKAASRVTAEGIVVAHISGTTGALMELNCETDFVSKNDDFLAFGKTLAELVATKAPVDVAALSALEIAGVTVEATRTALIGKIGENIAIRRFKRFSGDSKLVSYLHGTRIGVVVEYTGDDVAAKDVAMHVAAMKPVALTSADVPADLIEKERNVAAGKAAEDAKAAEAAGKAPQSAEIVTKRVEGSVQKFLKEVSLFNQTFVKNDKQTVEQMLKAASTTIKGFTMYIVGEGIEKKTDDFAAEVAAQVAAAKGQ.

The involved in Mg(2+) ion dislocation from EF-Tu stretch occupies residues 80–83 (TDFV).

This sequence belongs to the EF-Ts family.

Its subcellular location is the cytoplasm. Functionally, associates with the EF-Tu.GDP complex and induces the exchange of GDP to GTP. It remains bound to the aminoacyl-tRNA.EF-Tu.GTP complex up to the GTP hydrolysis stage on the ribosome. In Methylibium petroleiphilum (strain ATCC BAA-1232 / LMG 22953 / PM1), this protein is Elongation factor Ts.